The sequence spans 240 residues: Uridylate kinase (240 aa).

Lys-14–Gly-17 serves as a coordination point for ATP. Gly-56 is a binding site for UMP. 2 residues coordinate ATP: Gly-57 and Arg-61. UMP contacts are provided by residues Asp-76 and Thr-137–Thr-144. ATP contacts are provided by Thr-164, Tyr-170, and Asp-173.

It belongs to the UMP kinase family. In terms of assembly, homohexamer.

The protein localises to the cytoplasm. The enzyme catalyses UMP + ATP = UDP + ADP. It participates in pyrimidine metabolism; CTP biosynthesis via de novo pathway; UDP from UMP (UMPK route): step 1/1. Inhibited by UTP. Catalyzes the reversible phosphorylation of UMP to UDP. In Paracidovorax citrulli (strain AAC00-1) (Acidovorax citrulli), this protein is Uridylate kinase.